Reading from the N-terminus, the 119-residue chain is Large ribosomal subunit protein bL20 (119 aa).

Belongs to the bacterial ribosomal protein bL20 family.

In terms of biological role, binds directly to 23S ribosomal RNA and is necessary for the in vitro assembly process of the 50S ribosomal subunit. It is not involved in the protein synthesizing functions of that subunit. The chain is Large ribosomal subunit protein bL20 from Xylella fastidiosa (strain 9a5c).